A 120-amino-acid polypeptide reads, in one-letter code: Putative ankyrin repeat protein RBE_1215 (120 aa).

ANK repeat units follow at residues 22–52 (DGGN…LTNI) and 59–88 (FGDT…ITSV).

In Rickettsia bellii (strain RML369-C), this protein is Putative ankyrin repeat protein RBE_1215.